Consider the following 360-residue polypeptide: F-box protein SKP2A (360 aa).

The 47-residue stretch at 25–71 folds into the F-box domain; sequence IKEWKDIPVELLMRILSLVDDRNVIVASGVCTGWRDAISFGLTRLRL. (indol-3-yl)acetate contacts are provided by residues 127-128, 149-152, 175-178, and Asn202; these read SL, NLSG, and NLCG.

Part of a SCF (ASK-cullin-F-box) protein ligase complex. Interacts with CUL1 (RUB1-modified and non-modified isoforms), SKP1A, SKP1B and ASK18. Recruit DPB and phosphorylated E2FC. Interacts with auxin. Auxin controls the interaction with DPB. In terms of processing, polyubiquitinated and subsequently targeted to proteasome. Auxin promotes this ubiquitination-mediated degradation. In terms of tissue distribution, expressed in embryo, seedlings, hypocotyl, roots, leaves and flowers.

It localises to the nucleus. It functions in the pathway protein modification; protein ubiquitination. Its function is as follows. Component of SCF(SKP2A) E3 ubiquitin ligase complexes, which mediate the ubiquitination and subsequent proteasomal degradation of target proteins (including cell cycle repressors). Acts as an auxin receptor; one active auxin is indole-3-acetate. Regulates the stability of the transcription factors E2FC and DPB, repressors of cell proliferation. Confers increase tolerance to osmotic stress by promoting cell division, especially in meristems. Promotes the formation of lateral root primordia. The protein is F-box protein SKP2A (SKP2A) of Arabidopsis thaliana (Mouse-ear cress).